Reading from the N-terminus, the 303-residue chain is Signal recognition particle receptor FtsY (303 aa).

Residues 108 to 115 (GVNGVGKT), 190 to 194 (DTAGR), and 254 to 257 (TKLD) contribute to the GTP site.

The protein belongs to the GTP-binding SRP family. FtsY subfamily. As to quaternary structure, part of the signal recognition particle protein translocation system, which is composed of SRP and FtsY. SRP is a ribonucleoprotein composed of Ffh and a 4.5S RNA molecule.

It is found in the cell inner membrane. It localises to the cytoplasm. It catalyses the reaction GTP + H2O = GDP + phosphate + H(+). Functionally, involved in targeting and insertion of nascent membrane proteins into the cytoplasmic membrane. Acts as a receptor for the complex formed by the signal recognition particle (SRP) and the ribosome-nascent chain (RNC). Interaction with SRP-RNC leads to the transfer of the RNC complex to the Sec translocase for insertion into the membrane, the hydrolysis of GTP by both Ffh and FtsY, and the dissociation of the SRP-FtsY complex into the individual components. This chain is Signal recognition particle receptor FtsY, found in Rickettsia typhi (strain ATCC VR-144 / Wilmington).